The chain runs to 928 residues: DNA polymerase I (928 aa).

Positions 1 to 323 (MVQIPQNPLI…ADEAPEVTAT (323 aa)) constitute a 5'-3' exonuclease domain. The 3'-5' exonuclease domain maps to 324-517 (VISYDNYVTI…LHLKMWPDLQ (194 aa)). A klenow fragment region spans residues 324–928 (VISYDNYVTI…GSGENWDQAH (605 aa)). The polymerase stretch occupies residues 521–928 (GPLNVFENIE…GSGENWDQAH (408 aa)).

It belongs to the DNA polymerase type-A family. Single-chain monomer with multiple functions.

The catalysed reaction is DNA(n) + a 2'-deoxyribonucleoside 5'-triphosphate = DNA(n+1) + diphosphate. Functionally, in addition to polymerase activity, this DNA polymerase exhibits 3'-5' and 5'-3' exonuclease activity. It is able to utilize nicked circular duplex DNA as a template and can unwind the parental DNA strand from its template. In terms of biological role, genetic interactions among priB, dam, lexA, nagC, polA, rdgB, rdgB, rep and uup link the PriA-PriB replication restart pathway to DNA double-strand break repair. The sequence is that of DNA polymerase I (polA) from Escherichia coli (strain K12).